Consider the following 1171-residue polypeptide: DNA-directed RNA polymerase subunit beta (1171 aa).

The protein belongs to the RNA polymerase beta chain family. In terms of assembly, the RNAP catalytic core consists of 2 alpha, 1 beta, 1 beta' and 1 omega subunit. When a sigma factor is associated with the core the holoenzyme is formed, which can initiate transcription.

The enzyme catalyses RNA(n) + a ribonucleoside 5'-triphosphate = RNA(n+1) + diphosphate. DNA-dependent RNA polymerase catalyzes the transcription of DNA into RNA using the four ribonucleoside triphosphates as substrates. This chain is DNA-directed RNA polymerase subunit beta, found in Kineococcus radiotolerans (strain ATCC BAA-149 / DSM 14245 / SRS30216).